Reading from the N-terminus, the 638-residue chain is Outer dense fiber protein 2 (638 aa).

Thr73 carries the post-translational modification Phosphothreonine. Phosphoserine; by TSSK4 is present on Ser76. Ser87 and Ser90 each carry phosphoserine. The residue at position 91 (Thr91) is a Phosphothreonine. Phosphoserine occurs at positions 96 and 110. Residue Lys119 forms a Glycyl lysine isopeptide (Lys-Gly) (interchain with G-Cter in SUMO2) linkage. Residue Ser120 is modified to Phosphoserine. Residues Gln125 to Asp198 are a coiled coil. At Thr212 the chain carries Phosphothreonine. Coiled coils occupy residues Asp226–Leu404 and Glu442–Arg616. A Phosphoserine modification is found at Ser242. Positions Lys373–Lys396 are disordered. At Ser613 the chain carries Phosphoserine.

The protein belongs to the ODF2 family. Self-associates. Associates with microtubules and forms a fibrillar structure partially linked to the microtubule network. Interacts via its C-terminus with PLK1. Interacts with ODF1. Localized at the distal/subdistal appendages of mother centrioles. Interacts with MARK4; the interaction is required for localization of ODF2 to centrioles. Interacts with TSSK4. Interacts with AKNA. Interacts with QRICH2. Interacts with CFAP58. Interacts with BBOF1. Interacts with CCDC38. Interacts with CCDC42. Post-translationally, tyrosine phosphorylated. Phosphorylated on Ser-76 by TSSK4.

The protein localises to the cytoplasm. It is found in the cytoskeleton. The protein resides in the microtubule organizing center. Its subcellular location is the centrosome. It localises to the cell projection. The protein localises to the cilium. It is found in the centriole. The protein resides in the spindle pole. Its subcellular location is the flagellum. Seems to be a major component of sperm tail outer dense fibers (ODF). ODFs are filamentous structures located on the outside of the axoneme in the midpiece and principal piece of the mammalian sperm tail and may help to maintain the passive elastic structures and elastic recoil of the sperm tail. May have a modulating influence on sperm motility. Functions as a general scaffold protein that is specifically localized at the distal/subdistal appendages of mother centrioles. Component of the centrosome matrix required for the localization of PLK1 and NIN to the centrosomes. Required for the formation and/or maintenance of normal CETN1 assembly. The protein is Outer dense fiber protein 2 (ODF2) of Macaca fascicularis (Crab-eating macaque).